A 615-amino-acid chain; its full sequence is AP-1-like transcription factor yap1 (615 aa).

The span at 27–50 (SSNNPTQKQQTVTHNSEANQNLNH) shows a compositional bias: polar residues. Disordered regions lie at residues 27–84 (SSNN…EDSP) and 99–180 (NESL…RKEK). Residues 35-42 (QQTVTHNS) carry the Bipartite nuclear localization signal motif. A compositionally biased stretch (low complexity) spans 52–67 (PGHASSGSFSVSPPSG). The short motif at 68 to 75 (LDGSVNQS) is the Bipartite nuclear localization signal element. The span at 118-147 (PGDKRKDIDGQVNDKEDSGKKRRESDEKAA) shows a compositional bias: basic and acidic residues. One can recognise a bZIP domain in the interval 157-220 (SEPTSKRKAQ…ERLQLELKEY (64 aa)). The tract at residues 162–183 (KRKAQNRAAQRAFRERKEKHLK) is basic motif. Residues 185–192 (LEAKVEEL) are leucine-zipper. The tract at residues 214-364 (QLELKEYRKR…RGYQVNSSYS (151 aa)) is transcription activation 1. Residues 270–294 (LFTNTQTSKSNQNKAKDNPTATPRS) show a composition bias toward polar residues. Positions 270-416 (LFTNTQTSKS…AVKATESSTP (147 aa)) are disordered. The interval 289-301 (TATPRSEAQVPGV) is n-CRD. The segment covering 310–321 (SSPNGLSNGPSP) has biased composition (low complexity). Composition is skewed to polar residues over residues 322–344 (AKST…SGTL) and 358–369 (QVNSSYSASTKQ). Over residues 372–394 (HDTPSSDSPSSSSDSHQSQLLSS) the composition is skewed to low complexity. The tract at residues 409 to 508 (KATESSTPHA…SQDFGTFFDD (100 aa)) is transcription activation 2. 3 cysteine pairs are disulfide-bonded: cysteine 562/cysteine 586, cysteine 562/cysteine 595, and cysteine 586/cysteine 595. The interval 562–595 (CNKIWDRLQSMEKFRNGEIDVDNLCSELRTKARC) is c-CRD. Positions 580–587 (IDVDNLCS) match the Nuclear export signal motif.

Belongs to the bZIP family. YAP subfamily. In terms of processing, depending on the oxidative stress inducing agent, yap1 can undergo two distinct conformational changes, both involving disulfide bond formation, and both masking the nuclear export signal, thus abolishing nuclear export.

It is found in the nucleus. It localises to the cytoplasm. Functionally, transcription activator involved in oxidative stress response and redox homeostasis. Regulates the transcription of genes encoding antioxidant enzymes and components of the cellular thiol-reducing pathways, including thioredoxin peroxidase (aspF3), cytochrome peroxidase, and the protein AFUA_3G00730, which appears to belong to the glutathione S-transferase family. Proteins of the protein degradation pathway are also regulated by yap1, as well the p-nitroreductase family protein AFUA_5G09910. May be involved in antifungal resistance to voriconazole. The chain is AP-1-like transcription factor yap1 from Aspergillus fumigatus (strain ATCC MYA-4609 / CBS 101355 / FGSC A1100 / Af293) (Neosartorya fumigata).